The sequence spans 122 residues: Large ribosomal subunit protein uL14c (122 aa).

The protein belongs to the universal ribosomal protein uL14 family. As to quaternary structure, part of the 50S ribosomal subunit.

The protein localises to the plastid. Its subcellular location is the chloroplast. Functionally, binds to 23S rRNA. In Carica papaya (Papaya), this protein is Large ribosomal subunit protein uL14c.